A 459-amino-acid chain; its full sequence is Exodeoxyribonuclease 7 large subunit (459 aa).

The protein belongs to the XseA family. As to quaternary structure, heterooligomer composed of large and small subunits.

It localises to the cytoplasm. The enzyme catalyses Exonucleolytic cleavage in either 5'- to 3'- or 3'- to 5'-direction to yield nucleoside 5'-phosphates.. Bidirectionally degrades single-stranded DNA into large acid-insoluble oligonucleotides, which are then degraded further into small acid-soluble oligonucleotides. The chain is Exodeoxyribonuclease 7 large subunit from Pseudomonas aeruginosa (strain LESB58).